The primary structure comprises 809 residues: Glycerol-3-phosphate acyltransferase (809 aa).

The short motif at 306 to 311 is the HXXXXD motif element; the sequence is HRSHMD.

It belongs to the GPAT/DAPAT family.

The protein localises to the cell inner membrane. The catalysed reaction is sn-glycerol 3-phosphate + an acyl-CoA = a 1-acyl-sn-glycero-3-phosphate + CoA. Its pathway is phospholipid metabolism; CDP-diacylglycerol biosynthesis; CDP-diacylglycerol from sn-glycerol 3-phosphate: step 1/3. This chain is Glycerol-3-phosphate acyltransferase, found in Vibrio vulnificus (strain YJ016).